Reading from the N-terminus, the 174-residue chain is Dual-action ribosomal maturation protein DarP (174 aa).

Belongs to the DarP family.

The protein resides in the cytoplasm. In terms of biological role, member of a network of 50S ribosomal subunit biogenesis factors which assembles along the 30S-50S interface, preventing incorrect 23S rRNA structures from forming. Promotes peptidyl transferase center (PTC) maturation. The sequence is that of Dual-action ribosomal maturation protein DarP from Vibrio campbellii (strain ATCC BAA-1116).